Consider the following 186-residue polypeptide: Ribosome-recycling factor (186 aa).

The segment at 135-164 (DGMDDLKKAEKDGEIGQDESRAQSERVQKM) is disordered.

It belongs to the RRF family.

Its subcellular location is the cytoplasm. Functionally, responsible for the release of ribosomes from messenger RNA at the termination of protein biosynthesis. May increase the efficiency of translation by recycling ribosomes from one round of translation to another. The polypeptide is Ribosome-recycling factor (Rhizobium meliloti (strain 1021) (Ensifer meliloti)).